We begin with the raw amino-acid sequence, 279 residues long: Large ribosomal subunit protein uL2 (279 aa).

Positions G227–R279 are disordered.

This sequence belongs to the universal ribosomal protein uL2 family. In terms of assembly, part of the 50S ribosomal subunit. Forms a bridge to the 30S subunit in the 70S ribosome.

Functionally, one of the primary rRNA binding proteins. Required for association of the 30S and 50S subunits to form the 70S ribosome, for tRNA binding and peptide bond formation. It has been suggested to have peptidyltransferase activity; this is somewhat controversial. Makes several contacts with the 16S rRNA in the 70S ribosome. The sequence is that of Large ribosomal subunit protein uL2 from Neorickettsia sennetsu (strain ATCC VR-367 / Miyayama) (Ehrlichia sennetsu).